The primary structure comprises 1845 residues: MGTGFARGARGTAASGPGGGFLFAWILVSFTCHLASTQGAPEDVDVLQRLGLSWTKAGGGRSPTPPGVIPFPSGFIFTQRAKLQAPTANVLPTTLGRELALVLSLCSHRVNHAFLFAIRSRKHKLQLGLQFLPGRTIIHLGPRQSVAFDLDVHDGRWHHLALELRGRTVTMVTACGQHRVPVPLPSRRDSMLDPQGSFLLGKVNPRAVQFEGALCQFSIHPVAQVAHNYCAHLRERCRQVDTYSPQVGTLFPWDSGPAFALHPEPALLGLGNLTRTPATLGARPVSRALAVTLAPAMPTKPLRTVHPDVSEHSSSQTPLSPAKQSARKTPSPSSSASLANSTRVYRPAAAQPRQITTTSPTKRSPTKPSVSPLSVTPMKSPHATQKTGVPSFTKPVPPTQKPAPFTSYLAPSKASSPTVRPVQKTFMTPRPPVPSPQPLRPTTGLSKKFTNPTVAKSKSKTTSWASKPVLARSSVPKTLQQTVLSQSPVSYLGSQTLAPALPPLGVGNPRTMPPTRDSALTPAGSKKFTGRETSKKTRQKSSPRKPEPLSPGKSARDASPRDLTTKPSRPSTPALVLAPAYLLSSSPQPTSSSFPFFHLLGPTPFPMLMGPPGSKGDCGLPGPPGLPGLPGSPGARGPRGPPGPYGNPGPPGPPGAKGQKGDPGLSPGQAHDGAKGNMGLPGLSGNPGPLGRKGHKGHPGAAGHPGEQGQPGPEGSPGAKGYPGRQGFPGPVGDPGPKGSRGYIGLPGLFGLPGSDGERGLPGVPGKRGEMGRPGFPGDFGERGPPGLDGNPGEIGLPGPPGVLGLIGDTGALGPVGYPGPKGMKGLMGGVGEPGLKGDKGEQGVPGVSGDPGFQGDKGSHGLPGLPGGRGKPGPLGKAGDKGSLGFPGPPGPEGFPGDIGPPGDNGPEGMKGKPGARGLPGPPGQLGPEGDEGPMGPPGVPGLEGQPGRKGFPGRPGLDGSKGEPGDPGRPGPVGEQGLMGFIGLVGEPGIVGEKGDRGVMGPPGAPGPKGSMGHPGTPGGIGNPGEPGPWGPPGSRGLPGMRGAKGHRGPRGPDGPAGEQGSKGLKGRVGPRGRPGQPGQQGAAGERGHSGAKGFLGIPGPSGPPGAKGLPGEPGSQGPQGPVGPPGEMGPKGPPGAVGEPGLPGDSGMKGDLGPLGPPGEQGLIGQRGEPGLEGDHGPVGPDGLKGDRGDPGPDGEHGEKGQEGLKGEDGSPGPPGITGVPGREGKPGKQGEKGQRGAKGAKGHQGYLGEMGIPGEPGPPGTPGPKGSRGTLGPTGAPGRMGAQGEPGLAGYNGHKGITGPLGPPGPKGEKGDQGEDGKTEGPPGPPGDRGPVGDRGDRGEPGDPGYPGQEGVQGLRGEPGQQGQPGHPGPRGRPGPKGSKGEEGPKGKPGKAGPSGRRGTQGLQGLPGPRGVVGRQGPEGTAGSDGIPGRDGRPGYQGDQGNDGDPGPVGPAGRRGNPGVAGLPGAQGPPGFKGESGLPGQLGPPGKRGTEGGTGLPGNQGEPGSKGQPGDSGEMGFPGVAGLFGPKGPPGDIGFKGIQGPRGPPGLMGKEGIIGPPGMLGPSGLPGPKGDRGSRGDLGLQGPRGPPGPRGRPGPPGPPWHPIQFQQDDLGAAFQTWMDAQGAVRSEGYSYPDQLALDQGGEIFKTLHYLSNLIQSIKTPLGTKENPARVCRDLMDCEQRMADGTYWVDPNLGCSSDTIEVSCNFTQGGQTCLKPITASKAEFAVSRVQMNFLHLLSSEGTQHITIHCLNMTVWQEGPGRSSARQAVRFRAWNGQVFEAGGQFRPEVSMDGCKVHDGRWHQTLFTFRTQDPQQLPIVSVDNLPPVSSGKQYRLEVGPACFL.

The signal sequence occupies residues methionine 1–glycine 39. Residues alanine 40 to methionine 609 constitute a propeptide, N-terminal propeptide. Residues proline 72–cysteine 237 form the Laminin G-like domain. N-linked (GlcNAc...) asparagine glycosylation occurs at asparagine 272. Disordered regions lie at residues threonine 299–threonine 478, proline 502–threonine 572, leucine 608–proline 774, and leucine 827–glutamine 1608. Residues histidine 312–lysine 323 show a composition bias toward polar residues. Composition is skewed to low complexity over residues arginine 327–arginine 343 and threonine 356–proline 372. An N-linked (GlcNAc...) asparagine glycan is attached at asparagine 340. Residues proline 429 to leucine 439 show a composition bias toward pro residues. A compositionally biased stretch (polar residues) spans glycine 444–valine 454. The segment covering serine 554–threonine 564 has biased composition (basic and acidic residues). 11 consecutive Collagen-like domains span residues glycine 610–glycine 664, glycine 673–valine 732, glycine 742–proline 801, glycine 817–leucine 876, glycine 877–methionine 936, glycine 937–lysine 996, glycine 997–arginine 1038, glycine 1039–glycine 1096, glycine 1117–glutamate 1176, glycine 1177–lysine 1236, and glycine 1240–lysine 1299. A triple-helical region spans residues glycine 610–proline 1603. The span at arginine 639–proline 654 shows a compositional bias: pro residues. Low complexity-rich tracts occupy residues asparagine 677 to leucine 690 and proline 699 to alanine 719. Residues glycine 865–glycine 874 show a composition bias toward gly residues. Low complexity predominate over residues phenylalanine 896–glutamate 909. A compositionally biased stretch (gly residues) spans glycine 1018–glycine 1027. Low complexity-rich tracts occupy residues arginine 1074 to alanine 1086, leucine 1112 to glutamine 1122, and lysine 1152 to isoleucine 1167. 2 stretches are compositionally biased toward basic and acidic residues: residues leucine 1187–aspartate 1212 and arginine 1226–glutamine 1238. Composition is skewed to basic and acidic residues over residues lysine 1311–threonine 1323 and proline 1335–proline 1345. Residues glycine 1325–lysine 1384 enclose the Collagen-like 12 domain. Low complexity-rich tracts occupy residues arginine 1360–proline 1369, lysine 1395–proline 1422, and proline 1438–alanine 1465. 3 consecutive Collagen-like domains span residues glycine 1424–proline 1483, glycine 1484–glutamine 1543, and glycine 1544–proline 1603. Positions isoleucine 1557–proline 1572 are enriched in low complexity. Positions arginine 1588–histidine 1605 are enriched in pro residues. Positions isoleucine 1607–leucine 1845 are cleaved as a propeptide — C-terminal propeptide. The Fibrillar collagen NC1 domain occupies glycine 1645–leucine 1845. Intrachain disulfides connect cysteine 1675-cysteine 1707, cysteine 1716-cysteine 1843, and cysteine 1752-cysteine 1796. The Ca(2+) site is built by aspartate 1693, asparagine 1695, cysteine 1698, and aspartate 1701. An N-linked (GlcNAc...) asparagine glycan is attached at asparagine 1754.

It belongs to the fibrillar collagen family. As to expression, highly expressed in cartilage, eye and ear.

Its subcellular location is the secreted. It localises to the extracellular space. The protein resides in the extracellular matrix. Plays a role during the calcification of cartilage and the transition of cartilage to bone. The sequence is that of Collagen alpha-1(XXVII) chain (Col27a1) from Mus musculus (Mouse).